We begin with the raw amino-acid sequence, 347 residues long: Phosphoribosylformylglycinamidine cyclo-ligase (347 aa).

Belongs to the AIR synthase family.

It is found in the cytoplasm. It catalyses the reaction 2-formamido-N(1)-(5-O-phospho-beta-D-ribosyl)acetamidine + ATP = 5-amino-1-(5-phospho-beta-D-ribosyl)imidazole + ADP + phosphate + H(+). It functions in the pathway purine metabolism; IMP biosynthesis via de novo pathway; 5-amino-1-(5-phospho-D-ribosyl)imidazole from N(2)-formyl-N(1)-(5-phospho-D-ribosyl)glycinamide: step 2/2. The sequence is that of Phosphoribosylformylglycinamidine cyclo-ligase from Prochlorococcus marinus (strain MIT 9301).